Here is a 547-residue protein sequence, read N- to C-terminus: MDAQHLMTMSGISLEQVAIMGCSLGTGLLVSMIIYNYFFHPLARVPGPCTGAIFPFWSMSSLYRRRLNPDLAELHKKYGQILSLLSGYGGLLMCPRNTGPIVRVGPNQLSFATVEAQKMIYNAKPTHTGSDELFGRDGTLQDVLLSMILGAANIGSLSNRAEHKKMRKRLQPGFTSKALFEQESLLRMHMDRLLQGLAQDTGVIDLTEYFSRFLWDLIGDLSFGEPLVPEKHGRRTDTLRSLVGVYQGCFPILEAINYAVPQIEGVLKLALQLVPPATLRAVLPSATFREYDHPAINSHTTPLQCCINRQDGRSDFLTHIMGDKSSNPTELELSYDELHSNATVLMIAGYKTTETSLSALFYRLLSTPGVLEKLQTELFSNFQSIDEITGKKLLSLPYLNGCVNESLRLTPAVAGKFASRRSPGAIIEGFYVPSGTEVYTETYTMQRSPQYWHAPDEYRPERWFERGEGSPYAQDVHEAFKPFSSGPRACLGREMALQTLRLTAALLVYRFHLKIVNEDRFVWEQDTDSRMIYSKYHIKAIVQERLT.

Residues 19 to 39 (IMGCSLGTGLLVSMIIYNYFF) traverse the membrane as a helical segment. Asn-341 and Asn-404 each carry an N-linked (GlcNAc...) asparagine glycan. Cys-490 contacts heme.

The protein belongs to the cytochrome P450 family. The cofactor is heme.

It localises to the membrane. The catalysed reaction is sesterfisherol + 3 reduced [NADPH--hemoprotein reductase] + 3 O2 = sesterfisherate + 3 oxidized [NADPH--hemoprotein reductase] + 4 H2O + 4 H(+). The protein operates within secondary metabolite biosynthesis; terpenoid biosynthesis. Its function is as follows. Cytochrome P450 monooxygenase; part of the gene cluster that mediates the biosynthesis of sesterfisheric acid. The bifunctional terpene synthase NfSS converts DMAPP and IPP, and also GGPP, into sesterfisherol. The C-terminal prenyltransferase (PT) domain of NfSS catalyzes formation of GFPP, whereas the N-terminal terpene cyclase (TC) domain catalyzes the cyclization of GFPP to sesterfisherol. The cytochrome P450 monooxygenase NfP450 then catalyzes oxidative modifications of sesterfisherol into sesterfisheric acid. The polypeptide is Sesterfisheric acid synthase (Neosartorya fischeri (strain ATCC 1020 / DSM 3700 / CBS 544.65 / FGSC A1164 / JCM 1740 / NRRL 181 / WB 181) (Aspergillus fischerianus)).